The primary structure comprises 436 residues: Trigger factor (436 aa).

The region spanning 163 to 248 is the PPIase FKBP-type domain; the sequence is GDRVTVDFEG…VKKIEAAHLP (86 aa).

The protein belongs to the FKBP-type PPIase family. Tig subfamily.

The protein localises to the cytoplasm. It catalyses the reaction [protein]-peptidylproline (omega=180) = [protein]-peptidylproline (omega=0). Involved in protein export. Acts as a chaperone by maintaining the newly synthesized protein in an open conformation. Functions as a peptidyl-prolyl cis-trans isomerase. The chain is Trigger factor from Acidovorax ebreus (strain TPSY) (Diaphorobacter sp. (strain TPSY)).